We begin with the raw amino-acid sequence, 146 residues long: VHLTADEKAAVTALWGKVDVEDVGGEALGRLLVVYPWTQRFFDSFGDLSTPAAVMGNAKVKAHGKKVLNAFSEGMAHLDNLKGTFAKLSELHCDKLHVDPENFRLLGNVLVCVLAHHFGKEFTPQVQAAYQKVVAGVATALAHKYH.

At V1 the chain carries N-acetylvaline. Residues 2–146 (HLTADEKAAV…VATALAHKYH (145 aa)) enclose the Globin domain. T12 carries the phosphothreonine modification. A Phosphoserine modification is found at S44. K59 is subject to N6-acetyllysine. A heme b-binding site is contributed by H63. K82 carries the N6-acetyllysine modification. H92 is a binding site for heme b. C93 carries the post-translational modification S-nitrosocysteine. K144 bears the N6-acetyllysine mark.

This sequence belongs to the globin family. As to quaternary structure, heterotetramer of two alpha chains and two beta chains. As to expression, red blood cells.

Involved in oxygen transport from the lung to the various peripheral tissues. This Cephalopachus bancanus (Western tarsier) protein is Hemoglobin subunit beta (HBB).